Consider the following 344-residue polypeptide: Glycerol-3-phosphate dehydrogenase [NAD(P)+] 2 (344 aa).

Positions 12, 13, 33, 34, and 107 each coordinate NADPH. 3 residues coordinate sn-glycerol 3-phosphate: Lys-107, Gly-138, and Ser-140. Residue Ala-142 coordinates NADPH. Sn-glycerol 3-phosphate is bound by residues Lys-193, Asp-246, Ser-256, Arg-257, and Asn-258. Lys-193 serves as the catalytic Proton acceptor. Arg-257 lines the NADPH pocket. Residues Val-281 and Glu-283 each coordinate NADPH.

This sequence belongs to the NAD-dependent glycerol-3-phosphate dehydrogenase family.

Its subcellular location is the cytoplasm. The enzyme catalyses sn-glycerol 3-phosphate + NAD(+) = dihydroxyacetone phosphate + NADH + H(+). It carries out the reaction sn-glycerol 3-phosphate + NADP(+) = dihydroxyacetone phosphate + NADPH + H(+). It participates in membrane lipid metabolism; glycerophospholipid metabolism. Catalyzes the reduction of the glycolytic intermediate dihydroxyacetone phosphate (DHAP) to sn-glycerol 3-phosphate (G3P), the key precursor for phospholipid synthesis. This Salinibacter ruber (strain DSM 13855 / M31) protein is Glycerol-3-phosphate dehydrogenase [NAD(P)+] 2.